A 131-amino-acid chain; its full sequence is Small ribosomal subunit protein eS24 (131 aa).

Met-1 is modified (N-acetylmethionine). A Phosphothreonine modification is found at Thr-9. Residue Lys-37 forms a Glycyl lysine isopeptide (Lys-Gly) (interchain with G-Cter in SUMO2) linkage. Positions 90–100 (RLARHGLYEKK) are enriched in basic and acidic residues. The segment at 90-131 (RLARHGLYEKKKTSRKQRKERKNRMKKVRGTAKANVGAGKKK) is disordered. Basic residues predominate over residues 101–119 (KTSRKQRKERKNRMKKVRG).

It belongs to the eukaryotic ribosomal protein eS24 family. In terms of assembly, component of the small ribosomal subunit. Part of the small subunit (SSU) processome, composed of more than 70 proteins and the RNA chaperone small nucleolar RNA (snoRNA) U3.

Its subcellular location is the cytoplasm. The protein resides in the nucleus. It is found in the nucleolus. Component of the small ribosomal subunit. The ribosome is a large ribonucleoprotein complex responsible for the synthesis of proteins in the cell. Required for processing of pre-rRNA and maturation of 40S ribosomal subunits. Part of the small subunit (SSU) processome, first precursor of the small eukaryotic ribosomal subunit. During the assembly of the SSU processome in the nucleolus, many ribosome biogenesis factors, an RNA chaperone and ribosomal proteins associate with the nascent pre-rRNA and work in concert to generate RNA folding, modifications, rearrangements and cleavage as well as targeted degradation of pre-ribosomal RNA by the RNA exosome. The sequence is that of Small ribosomal subunit protein eS24 (RPS24) from Macaca fascicularis (Crab-eating macaque).